The chain runs to 207 residues: Outer-membrane lipoprotein LolB (207 aa).

An N-terminal signal peptide occupies residues 1–26 (MSKLKIDTKRRFSLLIALVLIISLSS). Residue cysteine 27 is the site of N-palmitoyl cysteine attachment. Cysteine 27 carries S-diacylglycerol cysteine lipidation.

It belongs to the LolB family. Monomer.

Its subcellular location is the cell outer membrane. Functionally, plays a critical role in the incorporation of lipoproteins in the outer membrane after they are released by the LolA protein. This Francisella tularensis subsp. tularensis (strain WY96-3418) protein is Outer-membrane lipoprotein LolB.